The primary structure comprises 539 residues: Fucosyltransferase 2 (539 aa).

Over 1 to 5 (MRITE) the chain is Cytoplasmic. Residues 6–26 (ILALFMVLVPVSLVIVAMFGY) traverse the membrane as a helical; Signal-anchor for type II membrane protein segment. Topologically, residues 27–539 (DQGNGFVQAS…SWGLKLVDNF (513 aa)) are lumenal. N-linked (GlcNAc...) asparagine glycosylation is found at N44, N231, and N482.

It belongs to the glycosyltransferase 37 family. In terms of tissue distribution, expressed in roots, stems, leaves, flowers, siliques and seedlings.

Its subcellular location is the golgi apparatus. The protein resides in the golgi stack membrane. The protein operates within protein modification; protein glycosylation. Functionally, may be involved in cell wall biosynthesis. May act as a fucosyltransferase. The sequence is that of Fucosyltransferase 2 (FUT2) from Arabidopsis thaliana (Mouse-ear cress).